Reading from the N-terminus, the 295-residue chain is Nucleotide-binding protein Lxx11490 (295 aa).

19-26 provides a ligand contact to ATP; that stretch reads GMSGAGRS. 70–73 provides a ligand contact to GTP; it reads DVRG.

It belongs to the RapZ-like family.

Functionally, displays ATPase and GTPase activities. The chain is Nucleotide-binding protein Lxx11490 from Leifsonia xyli subsp. xyli (strain CTCB07).